The following is a 182-amino-acid chain: Core-binding factor subunit beta (182 aa).

Alanine 173 is modified (phosphoserine).

It belongs to the CBF-beta family. Heterodimer with RUNX1, RUNX2 and RUNX3. Interacts with COPRS. Found in a complex with PRMT5 and RUNX1. As to quaternary structure, (Microbial infection) Interacts with HIV-1 Vif; forming an active cullin-5-RING E3 ubiquitin-protein ligase complex (ECS complex).

The protein localises to the nucleus. Functionally, forms the heterodimeric complex core-binding factor (CBF) with RUNX family proteins (RUNX1, RUNX2, and RUNX3). RUNX members modulate the transcription of their target genes through recognizing the core consensus binding sequence 5'-TGTGGT-3', or very rarely, 5'-TGCGGT-3', within their regulatory regions via their runt domain, while CBFB is a non-DNA-binding regulatory subunit that allosterically enhances the sequence-specific DNA-binding capacity of RUNX. The heterodimers bind to the core site of a number of enhancers and promoters, including murine leukemia virus, polyomavirus enhancer, T-cell receptor enhancers, LCK, IL3 and GM-CSF promoters. CBF complexes repress ZBTB7B transcription factor during cytotoxic (CD8+) T cell development. They bind to RUNX-binding sequence within the ZBTB7B locus acting as transcriptional silencer and allowing for cytotoxic T cell differentiation. In terms of biological role, (Microbial infection) Following infection, hijacked by the HIV-1 Vif protein, leading to the formation a cullin-5-RING E3 ubiquitin-protein ligase complex (ECS complex) that catalyzes ubiquitination and degradation of APOBEC3F and APOBEC3G. The complex can also ubiquitinate APOBEC3H to some extent. Association with HIV-1 Vif protein also inhibits the transcription coactivator activity of CBFB/CBF-beta. The sequence is that of Core-binding factor subunit beta (CBFB) from Homo sapiens (Human).